The sequence spans 822 residues: Pentatricopeptide repeat-containing protein At2g41720 (822 aa).

Positions 1-28 are disordered; the sequence is MATVTNFKLVTPPESSRADKPGATKASD. PPR repeat units lie at residues 106 to 136, 142 to 176, 177 to 211, 212 to 246, 247 to 281, 282 to 316, 319 to 353, 354 to 388, 389 to 423, 424 to 458, 459 to 493, 494 to 528, 529 to 563, 564 to 598, 599 to 633, 634 to 668, 669 to 699, 704 to 738, and 739 to 773; these read ARKNFPVLIRELSRRGCIELCVNVFKWMKIQ, RNDIYNMMIRLHARHNWVDQARGLFFEMQKWSCKP, DAETYDALINAHGRAGQWRWAMNLMDDMLRAAIAP, SRSTYNNLINACGSSGNWREALEVCKKMTDNGVGP, DLVTHNIVLSAYKSGRQYSKALSYFELMKGAKVRP, DTTTFNIIIYCLSKLGQSSQALDLFNSMREKRAEC, DVVTFTSIMHLYSVKGEIENCRAVFEAMVAEGLKP, NIVSYNALMGAYAVHGMSGTALSVLGDIKQNGIIP, DVVSYTCLLNSYGRSRQPGKAKEVFLMMRKERRKP, NVVTYNALIDAYGSNGFLAEAVEIFRQMEQDGIKP, NVVSVCTLLAACSRSKKKVNVDTVLSAAQSRGINL, NTAAYNSAIGSYINAAELEKAIALYQSMRKKKVKA, DSVTFTILISGSCRMSKYPEAISYLKEMEDLSIPL, TKEVYSSVLCAYSKQGQVTEAESIFNQMKMAGCEP, DVIAYTSMLHAYNASEKWGKACELFLEMEANGIEP, DSIACSALMRAFNKGGQPSNVFVLMDLMREKEIPF, TGAVFFEIFSACNTLQEWKRAIDLIQMMDPY, SIGLTNQMLHLFGKSGKVEAMMKLFYKIIASGVGI, and NLKTYAILLEHLLAVGNWRKYIEVLEWMSGAGIQP.

This sequence belongs to the PPR family. P subfamily.

In Arabidopsis thaliana (Mouse-ear cress), this protein is Pentatricopeptide repeat-containing protein At2g41720 (EMB2654).